The chain runs to 1556 residues: Ubiquitin carboxyl-terminal hydrolase 47 (1556 aa).

A disordered region spans residues 117–231; sequence MKSDGEKAKS…AKKTAKVTSK (115 aa). Positions 146–156 are enriched in low complexity; the sequence is ASGSSSPSKAK. Phosphoserine is present on residues serine 172 and serine 173. Residues 180–189 show a composition bias toward low complexity; sequence IKTTAAKISK. Basic and acidic residues predominate over residues 191-200; the sequence is GSEKAPRASP. Positions 208–219 are enriched in polar residues; it reads TEINSKNTSSES. Serine 238 is subject to Phosphoserine. Residues 396 to 779 form the USP domain; it reads VGLVNQAMTC…NAYMLMYRQV (384 aa). Residue cysteine 405 is the Nucleophile of the active site. Polar residues-rich tracts occupy residues 628 to 642 and 661 to 673; these read NRSGNSGEQNSQLNG and LSSGVVTTASSSQ. The tract at residues 628–697 is disordered; sequence NRSGNSGEQN…SSSTSKSAKQ (70 aa). A compositionally biased stretch (low complexity) spans 688-697; the sequence is SSSTSKSAKQ. Histidine 720 acts as the Proton acceptor in catalysis. The tract at residues 1087–1148 is disordered; that stretch reads EPMSQPSPSH…LSSPEDEAAS (62 aa). The span at 1109 to 1125 shows a compositional bias: basic and acidic residues; it reads DGDRTLVETDNMAHRGG. The span at 1128–1141 shows a compositional bias: low complexity; sequence SQVSSTSHSPQLSS. Phosphoserine is present on residues serine 1131, serine 1132, serine 1140, serine 1141, serine 1199, serine 1201, and serine 1205.

Belongs to the peptidase C19 family. As to quaternary structure, interacts with ttk.

The protein resides in the nucleus. The catalysed reaction is Thiol-dependent hydrolysis of ester, thioester, amide, peptide and isopeptide bonds formed by the C-terminal Gly of ubiquitin (a 76-residue protein attached to proteins as an intracellular targeting signal).. Functionally, ubiquitin-specific protease that deubiquitinates target proteins to regulate different cellular and developmental pathways. Functions downstream of Dsor1/MEK to positively regulate the Ras/MAPK signaling pathway. Likely to modulate the pathway during various cellular and developmental processes including rl/MAPK activation by the receptors InR, Egfr and sevenless/sev. Functions in the post-translational stabilization of rl/MAPK levels in a mechanism that is independent of rl activity and opposes the activity of the E2 enzyme Unc6 and the putative E3 ligases poe, Ufd4 and Kcmf1, which mediate the ubiquitination and proteasomal degradation of rl. During eye development it may also act downstream of rl/MAPK to negatively regulate the Ras/MAPK signaling pathway by stabilizing the transcriptional repressor ttk and consequently inhibiting photoreceptor cell development. This suggests that at least during eye development, it may act in both the positive and negative regulation of the Ras/MAPK signaling pathway to mediate the development of different cell types. Positively regulates border follicle cell migration during oogenesis by mediating the deubiquitination and stabilization of slbo. In the wing disks it positively regulates wg signaling by stabilizing arm. Has an effect on position-effect variegation. The chain is Ubiquitin carboxyl-terminal hydrolase 47 from Drosophila melanogaster (Fruit fly).